The sequence spans 862 residues: DNA mismatch repair protein MutS (862 aa).

An ATP-binding site is contributed by 608–615; the sequence is GPNMAGKS.

The protein belongs to the DNA mismatch repair MutS family.

Its function is as follows. This protein is involved in the repair of mismatches in DNA. It is possible that it carries out the mismatch recognition step. This protein has a weak ATPase activity. In Bacteroides fragilis (strain YCH46), this protein is DNA mismatch repair protein MutS.